A 103-amino-acid chain; its full sequence is UPF0235 protein RL4503 (103 aa).

Belongs to the UPF0235 family.

This is UPF0235 protein RL4503 from Rhizobium johnstonii (strain DSM 114642 / LMG 32736 / 3841) (Rhizobium leguminosarum bv. viciae).